The following is a 726-amino-acid chain: MESLVAICDTFISSIDDSGVGHVDDCVAGYFSASASQTGTPDRVARLMSERLHHPKKWILRAGLWLLSTWIGSLVLCGWRSFTGEFPYFRRFCRLPEKRREEILLNWSSSYFSLLRMLFRTIKLISALVFFTQVDEKGRNLAWKAIGYNGPSPDHSDHEVELNEEKKKKKPEEIFGPLYNGIVDLKSPREAVEKKLAGRGFAVSNQKRNTNGSSISDPVMKIQCDAVVVGSGSGGGVAAGVLAKAGYKVLVIESGNYYARSKLSLLEGQAMDDMYLSGGLLATSDTNVVILAGSTVGGGSTINWSASIKTPEHVMKEWAEKSKLEMFGSDLYREAMDVVCKRMGVQCGFVEEGFNNEVLRKGCEKLGLPVKNIPRNAPSDHYCGFCCLGCKKGQKQGTSETWLVDLVESDNGLILPGCQATEVMYDCEQGKKKKATGVAFAFGEEIYVVESRVTIVACGALRTPHLLKRSGLKNSNIGRNLCLHPVVMAWGWFPEEDKWPEKKKKSYEGGIMTAMSSVVIEETHSSYGEMVIQTPALHPGMFSGIIPWTSSKDFKTRMLKFSRTAHIFALLRDKGTGTIDSKTYIDYNLNDEDEESLKNGLERVLKILAAAGAEEIGTHHSEGRSLNVRTASSLEIERFVREESSKPLKDLSGQICSAHQMGSCRMGIRPEESAVRPTGETWEVERLFVADTSVFPTALGVNPMVTVQSIAYCIGLNVVDVLKKKK.

A helical membrane pass occupies residues 103 to 119; it reads ILLNWSSSYFSLLRMLF. 224-239 is a binding site for FAD; sequence CDAVVVGSGSGGGVAA. The active-site Proton acceptor is the His659.

Belongs to the GMC oxidoreductase family.

It is found in the membrane. It catalyses the reaction a long-chain primary fatty alcohol + O2 = a long-chain fatty aldehyde + H2O2. Functionally, long-chain fatty alcohol oxidase involved in the omega-oxidation pathway of lipid degradation. In Arabidopsis thaliana (Mouse-ear cress), this protein is Long-chain-alcohol oxidase FAO4A (FAO4A).